We begin with the raw amino-acid sequence, 1063 residues long: Retinoblastoma-like protein 1 (1063 aa).

Thr332, Thr369, and Thr385 each carry phosphothreonine. A domain A region spans residues 383–584; it reads VTTPVASATQ…WEALHASANR (202 aa). A pocket; binds T and E1A region spans residues 383-944; sequence VTTPVASATQ…GRVKSFALKY (562 aa). Positions 585–779 are spacer; the sequence is VPSCEEVIFP…AQDAHLTGVS (195 aa). Residues Ser640, Ser650, Ser748, and Ser761 each carry the phosphoserine modification. The tract at residues 780-944 is domain B; it reads KPKRTGSLAL…GRVKSFALKY (165 aa). Residues Ser959, Ser970, and Ser983 each carry the phosphoserine modification. A Phosphothreonine modification is found at Thr992. Phosphoserine is present on residues Ser1004 and Ser1036.

It belongs to the retinoblastoma protein (RB) family. As to quaternary structure, component of the DREAM complex (also named LINC complex) at least composed of E2F4, E2F5, LIN9, LIN37, LIN52, LIN54, MYBL1, MYBL2, RBL1, RBL2, RBBP4, TFDP1 and TFDP2. The complex exists in quiescent cells where it represses cell cycle-dependent genes. It dissociates in S phase when LIN9, LIN37, LIN52 and LIN54 form a subcomplex that binds to MYBL2. Interacts with AATF. Interacts with KDM5A. Interacts with KMT5B and KMT5C. Interacts with USP4. Interacts with RBBP9. In terms of processing, cell-cycle arrest properties are inactivated by phosphorylation on Thr-332, Ser-640, Ser-959 and Ser-970 by CDK4. Highly expressed in fetal heart and liver. Expressed at low levels in all other fetal tissues except skeletal muscle. High levels in neonatal spleen and thymus with low levels in other tissues. In adult, highly expressed in testis. Barely detectable in other tissues.

The protein resides in the nucleus. Functionally, key regulator of entry into cell division. Directly involved in heterochromatin formation by maintaining overall chromatin structure and, in particular, that of constitutive heterochromatin by stabilizing histone methylation. Recruits and targets histone methyltransferases KMT5B and KMT5C, leading to epigenetic transcriptional repression. Controls histone H4 'Lys-20' trimethylation. Probably acts as a transcription repressor by recruiting chromatin-modifying enzymes to promoters. Potent inhibitor of E2F-mediated trans-activation. May act as a tumor suppressor. The protein is Retinoblastoma-like protein 1 (Rbl1) of Mus musculus (Mouse).